A 238-amino-acid chain; its full sequence is Ribonuclease M (238 aa).

Intrachain disulfides connect Cys-5–Cys-22, Cys-13–Cys-58, Cys-21–Cys-126, Cys-66–Cys-118, and Cys-191–Cys-225. Residue His-51 is part of the active site. The N-linked (GlcNAc...) asparagine glycan is linked to Asn-74. Active-site residues include Glu-111 and His-115.

Belongs to the RNase T2 family.

It carries out the reaction a ribonucleotidyl-ribonucleotide-RNA + H2O = a 3'-end 3'-phospho-ribonucleotide-RNA + a 5'-end dephospho-ribonucleoside-RNA + H(+). Functionally, this is a base non-specific and adenylic acid preferential ribonuclease. In Aspergillus phoenicis (Aspergillus saitoi), this protein is Ribonuclease M.